The chain runs to 275 residues: MQIHTTVASLRAARARAGRVALVPTMGNLHDGHIALMRQAAGRADCVIASIFVNRLQFGPNEDFDKYPRTLQADIERLEAAGVAHLFAPDESEMYPQPQRYHVDPAPAQVSILDGEFRPGHFRGVATVVLKLLNIVQPDVALFGKKDYQQLMVLSNMVREFALPIEVLPGDTVRADDGLALSSRNGYLSAAERAEAPRLYALLCRIRDAVRAGDHDFLKLETEAMAQLEAHGWAPDYIAIRRQADLQPPVHADDPLVVLAAARLGRTRLIDNLEI.

Position 26-33 (26-33) interacts with ATP; that stretch reads MGNLHDGH. H33 functions as the Proton donor in the catalytic mechanism. Q57 is a binding site for (R)-pantoate. Q57 lines the beta-alanine pocket. 144-147 is an ATP binding site; sequence GKKD. Residue Q150 coordinates (R)-pantoate. ATP-binding positions include V173 and 181–184; that span reads LSSR.

It belongs to the pantothenate synthetase family. Homodimer.

It is found in the cytoplasm. It catalyses the reaction (R)-pantoate + beta-alanine + ATP = (R)-pantothenate + AMP + diphosphate + H(+). It functions in the pathway cofactor biosynthesis; (R)-pantothenate biosynthesis; (R)-pantothenate from (R)-pantoate and beta-alanine: step 1/1. Functionally, catalyzes the condensation of pantoate with beta-alanine in an ATP-dependent reaction via a pantoyl-adenylate intermediate. The polypeptide is Pantothenate synthetase (Azoarcus sp. (strain BH72)).